A 631-amino-acid polypeptide reads, in one-letter code: Biotin--protein ligase (631 aa).

In terms of domain architecture, BPL/LPL catalytic spans 341–553 (ELYAKLINGC…QFDRYHRLLL (213 aa)).

It belongs to the biotin--protein ligase family. In terms of assembly, monomer.

Its subcellular location is the cytoplasm. The catalysed reaction is apo-[methylmalonyl-CoA:pyruvate carboxytransferase] + biotin + ATP = holo-[methylmalonyl-CoA:pyruvate carboxytransferase] + AMP + diphosphate + H(+). It catalyses the reaction apo-[propionyl-CoA:carbon-dioxide ligase (ADP-forming)] + biotin + ATP = holo-[propionyl-CoA:carbon-dioxide ligase (ADP-forming)] + AMP + diphosphate + H(+). The enzyme catalyses apo-[3-methylcrotonoyl-CoA:carbon-dioxide ligase (ADP-forming)] + biotin + ATP = holo-[3-methylcrotonoyl-CoA:carbon-dioxide ligase (ADP-forming)] + AMP + diphosphate + H(+). It carries out the reaction biotin + L-lysyl-[protein] + ATP = N(6)-biotinyl-L-lysyl-[protein] + AMP + diphosphate + H(+). Its function is as follows. Post-translational modification of specific protein by attachment of biotin. Acts on various carboxylases such as acetyl-CoA-carboxylase, pyruvate carboxylase, propionyl CoA carboxylase, and 3-methylcrotonyl CoA carboxylase. This Schizosaccharomyces pombe (strain 972 / ATCC 24843) (Fission yeast) protein is Biotin--protein ligase (bpl1).